The following is a 406-amino-acid chain: Dihydroorotase, mitochondrial (406 aa).

Residues 1-41 (MQTAATSTFFANPHVKHLPGPFLRPSPHYGALVHLPSFRNK) constitute a mitochondrion transit peptide. Histidine 69, histidine 71, lysine 155, histidine 193, histidine 231, and aspartate 305 together coordinate Zn(2+). Position 155 is an N6-carboxylysine (lysine 155).

It belongs to the metallo-dependent hydrolases superfamily. DHOase family. Class II DHOase subfamily. Zn(2+) serves as cofactor.

Its subcellular location is the mitochondrion. The catalysed reaction is (S)-dihydroorotate + H2O = N-carbamoyl-L-aspartate + H(+). The protein operates within pyrimidine metabolism; UMP biosynthesis via de novo pathway; (S)-dihydroorotate from bicarbonate: step 3/3. This chain is Dihydroorotase, mitochondrial (PYRC), found in Oryza sativa subsp. japonica (Rice).